The primary structure comprises 421 residues: Gamma-glutamyl phosphate reductase (421 aa).

Belongs to the gamma-glutamyl phosphate reductase family.

The protein resides in the cytoplasm. The catalysed reaction is L-glutamate 5-semialdehyde + phosphate + NADP(+) = L-glutamyl 5-phosphate + NADPH + H(+). It participates in amino-acid biosynthesis; L-proline biosynthesis; L-glutamate 5-semialdehyde from L-glutamate: step 2/2. Catalyzes the NADPH-dependent reduction of L-glutamate 5-phosphate into L-glutamate 5-semialdehyde and phosphate. The product spontaneously undergoes cyclization to form 1-pyrroline-5-carboxylate. This is Gamma-glutamyl phosphate reductase from Pseudomonas paraeruginosa (strain DSM 24068 / PA7) (Pseudomonas aeruginosa (strain PA7)).